We begin with the raw amino-acid sequence, 73 residues long: UPF0435 protein Lm4b_01721 (73 aa).

It belongs to the UPF0435 family.

This is UPF0435 protein Lm4b_01721 from Listeria monocytogenes serotype 4b (strain CLIP80459).